The sequence spans 363 residues: tRNA N6-adenosine threonylcarbamoyltransferase (363 aa).

Histidine 138, histidine 142, and tyrosine 159 together coordinate Fe cation. Residues 159–163 (YVSGG), aspartate 191, aspartate 212, and serine 295 each bind substrate. Aspartate 323 contributes to the Fe cation binding site.

The protein belongs to the KAE1 / TsaD family. It depends on Fe(2+) as a cofactor.

The protein localises to the cytoplasm. It carries out the reaction L-threonylcarbamoyladenylate + adenosine(37) in tRNA = N(6)-L-threonylcarbamoyladenosine(37) in tRNA + AMP + H(+). In terms of biological role, required for the formation of a threonylcarbamoyl group on adenosine at position 37 (t(6)A37) in tRNAs that read codons beginning with adenine. Is probably involved in the transfer of the threonylcarbamoyl moiety of threonylcarbamoyl-AMP (TC-AMP) to the N6 group of A37. The protein is tRNA N6-adenosine threonylcarbamoyltransferase of Hyperthermus butylicus (strain DSM 5456 / JCM 9403 / PLM1-5).